The primary structure comprises 536 residues: Chaperonin GroEL 2 (536 aa).

ATP contacts are provided by residues 29–32, lysine 50, glycine 416, and aspartate 497; that span reads TLGP.

Belongs to the chaperonin (HSP60) family. Forms a cylinder of 14 subunits composed of two heptameric rings stacked back-to-back. Interacts with the co-chaperonin GroES.

The protein resides in the cytoplasm. The enzyme catalyses ATP + H2O + a folded polypeptide = ADP + phosphate + an unfolded polypeptide.. In terms of biological role, together with its co-chaperonin GroES, plays an essential role in assisting protein folding. The GroEL-GroES system forms a nano-cage that allows encapsulation of the non-native substrate proteins and provides a physical environment optimized to promote and accelerate protein folding. This chain is Chaperonin GroEL 2, found in Chlamydia caviae (strain ATCC VR-813 / DSM 19441 / 03DC25 / GPIC) (Chlamydophila caviae).